The following is a 196-amino-acid chain: uncharacterized protein (196 aa).

This is an uncharacterized protein from Sinorhizobium fredii (strain NBRC 101917 / NGR234).